A 289-amino-acid polypeptide reads, in one-letter code: MSSHAEPTPVARNRKPLTLPALRAMQQRGEKIAMLTAYESTLARVADEAGVDTILVGDSLGMVVQGHASTLPVTLDEMAYHTRCVARGLQGGAAWLVADLPFASYHQGPSQAMAAAATLMQAGAQMIKLEGGGWTAETVRFLVERGVPVCAHLGLTPQSVHALGGYRIQGRDEAGAAELRRQATELTQAGAAMMVLELMPSAVAAAVQADNPQLMTIGIGAGPATAGQVLVVHDMLGLTRGKLPRFVRNFMHSEAGQNLSVEDAIRAYVAAVKDASFPDPVAHAYASAS.

Aspartate 58 and aspartate 99 together coordinate Mg(2+). 3-methyl-2-oxobutanoate-binding positions include 58 to 59, aspartate 99, and lysine 128; that span reads DS. Residue glutamate 130 participates in Mg(2+) binding. Glutamate 197 acts as the Proton acceptor in catalysis.

Belongs to the PanB family. Homodecamer; pentamer of dimers. It depends on Mg(2+) as a cofactor.

The protein localises to the cytoplasm. It catalyses the reaction 3-methyl-2-oxobutanoate + (6R)-5,10-methylene-5,6,7,8-tetrahydrofolate + H2O = 2-dehydropantoate + (6S)-5,6,7,8-tetrahydrofolate. Its pathway is cofactor biosynthesis; (R)-pantothenate biosynthesis; (R)-pantoate from 3-methyl-2-oxobutanoate: step 1/2. Catalyzes the reversible reaction in which hydroxymethyl group from 5,10-methylenetetrahydrofolate is transferred onto alpha-ketoisovalerate to form ketopantoate. In Leptothrix cholodnii (strain ATCC 51168 / LMG 8142 / SP-6) (Leptothrix discophora (strain SP-6)), this protein is 3-methyl-2-oxobutanoate hydroxymethyltransferase.